The chain runs to 228 residues: LOB domain-containing protein 30 (228 aa).

The region spanning 16–118 is the LOB domain; it reads GPCGACKFLR…TELSYLQAHL (103 aa). The segment at 188-228 is disordered; that stretch reads SNMGGGGELQALAREFIHGGQMPAQPSPGTSGSASSVIKRE. Over residues 214–228 the composition is skewed to polar residues; sequence SPGTSGSASSVIKRE.

The protein belongs to the LOB domain-containing protein family. In terms of tissue distribution, expressed in roots, stems, leaves and flowers. Expressed in vascular tissues of hypocotyls, leaves, roots, developing floral organs and siliques.

In terms of biological role, involved in the positive regulation of tracheary element (TE) differentiation. Involved in a positive feedback loop that maintains or promotes NAC030/VND7 expression that regulates TE differentiation-related genes. In Arabidopsis thaliana (Mouse-ear cress), this protein is LOB domain-containing protein 30 (LBD30).